The following is a 264-amino-acid chain: Mitochondrial distribution and morphology protein 12 (264 aa).

The 232-residue stretch at methionine 1 to asparagine 232 folds into the SMP-LTD domain. The tract at residues glutamate 240–alanine 264 is disordered. Positions serine 248–alanine 264 are enriched in basic and acidic residues.

The protein belongs to the MDM12 family. As to quaternary structure, component of the ER-mitochondria encounter structure (ERMES) or MDM complex, composed of MMM1, MDM10, MDM12 and MDM34. An MMM1 homodimer associates with one molecule of MDM12 on each side in a pairwise head-to-tail manner, and the SMP-LTD domains of MMM1 and MDM12 generate a continuous hydrophobic tunnel for phospholipid trafficking.

It is found in the mitochondrion outer membrane. It localises to the endoplasmic reticulum membrane. Its function is as follows. Component of the ERMES/MDM complex, which serves as a molecular tether to connect the endoplasmic reticulum (ER) and mitochondria. Components of this complex are involved in the control of mitochondrial shape and protein biogenesis, and function in nonvesicular lipid trafficking between the ER and mitochondria. MDM12 is required for the interaction of the ER-resident membrane protein MMM1 and the outer mitochondrial membrane-resident beta-barrel protein MDM10. The MDM12-MMM1 subcomplex functions in the major beta-barrel assembly pathway that is responsible for biogenesis of all mitochondrial outer membrane beta-barrel proteins, and acts in a late step after the SAM complex. The MDM10-MDM12-MMM1 subcomplex further acts in the TOM40-specific pathway after the action of the MDM12-MMM1 complex. Essential for establishing and maintaining the structure of mitochondria and maintenance of mtDNA nucleoids. In Eremothecium gossypii (strain ATCC 10895 / CBS 109.51 / FGSC 9923 / NRRL Y-1056) (Yeast), this protein is Mitochondrial distribution and morphology protein 12.